The following is a 572-amino-acid chain: Moesin (572 aa).

Residues 1 to 294 form the FERM domain; the sequence is MPRGVAVRVT…GNHELYMRRR (294 aa). Disordered regions lie at residues 444-508 and 523-544; these read SQER…SYLP and LQAMKDESKGEDRYDKIHQENI. The segment covering 454-475 has biased composition (low complexity); that stretch reads AQEAAAAQHAAQLAAQREAQQL. Acidic residues predominate over residues 480-502; that stretch reads EGEEDEQDHELEVQQDDNDDLDD. Residues 525 to 544 show a composition bias toward basic and acidic residues; the sequence is AMKDESKGEDRYDKIHQENI.

Its subcellular location is the cell membrane. It localises to the cytoplasm. It is found in the cytoskeleton. The protein resides in the cell projection. Functionally, probably involved in connections of major cytoskeletal structures to the plasma membrane. The sequence is that of Moesin from Lytechinus variegatus (Green sea urchin).